We begin with the raw amino-acid sequence, 308 residues long: 4-diphosphocytidyl-2-C-methyl-D-erythritol kinase (308 aa).

Lys24 is a catalytic residue. Residue 118 to 128 (PVGAGMAGGSA) coordinates ATP. The active site involves Asp160.

Belongs to the GHMP kinase family. IspE subfamily.

It carries out the reaction 4-CDP-2-C-methyl-D-erythritol + ATP = 4-CDP-2-C-methyl-D-erythritol 2-phosphate + ADP + H(+). The protein operates within isoprenoid biosynthesis; isopentenyl diphosphate biosynthesis via DXP pathway; isopentenyl diphosphate from 1-deoxy-D-xylulose 5-phosphate: step 3/6. Its function is as follows. Catalyzes the phosphorylation of the position 2 hydroxy group of 4-diphosphocytidyl-2C-methyl-D-erythritol. This chain is 4-diphosphocytidyl-2-C-methyl-D-erythritol kinase, found in Bifidobacterium adolescentis (strain ATCC 15703 / DSM 20083 / NCTC 11814 / E194a).